A 417-amino-acid polypeptide reads, in one-letter code: Gamma-glutamyl phosphate reductase (417 aa).

The protein belongs to the gamma-glutamyl phosphate reductase family.

The protein localises to the cytoplasm. It carries out the reaction L-glutamate 5-semialdehyde + phosphate + NADP(+) = L-glutamyl 5-phosphate + NADPH + H(+). It participates in amino-acid biosynthesis; L-proline biosynthesis; L-glutamate 5-semialdehyde from L-glutamate: step 2/2. Its function is as follows. Catalyzes the NADPH-dependent reduction of L-glutamate 5-phosphate into L-glutamate 5-semialdehyde and phosphate. The product spontaneously undergoes cyclization to form 1-pyrroline-5-carboxylate. The sequence is that of Gamma-glutamyl phosphate reductase from Phocaeicola vulgatus (strain ATCC 8482 / DSM 1447 / JCM 5826 / CCUG 4940 / NBRC 14291 / NCTC 11154) (Bacteroides vulgatus).